The following is a 560-amino-acid chain: Protein AATF (560 aa).

Residue alanine 2 is modified to N-acetylalanine. 2 positions are modified to phosphoserine: serine 61 and serine 63. Positions 76–208 (TSRKAWNEDH…GDRNSEDDGV (133 aa)) are disordered. Acidic residues predominate over residues 94-129 (SDEEISDEEGSGDEDSEGLGLEEYDEDDLGAAEEQE). 2 positions are modified to phosphoserine: serine 150 and serine 155. Basic and acidic residues predominate over residues 156–165 (DFEKFTKGMD). The span at 168-195 (GSSEEEEDEESGMEEGDDAEDSQGESEE) shows a compositional bias: acidic residues. Phosphoserine is present on residues serine 203, serine 273, serine 316, serine 320, and serine 321. The interval 273–315 (SALKNSHKALKALLRSLVGLQEELLFQYPDTRYLVDGTKPNAG) is POLR2J binding. Residues 309–333 (GTKPNAGSEEISSEDDELVEEKKQQ) form a disordered region. The tract at residues 316-372 (SEEISSEDDELVEEKKQQRRRVPAKRKLEMEDYPSFMAKRFADFTVYRNRTLQKWHD) is RB1 binding. The RB1 and SP1 binding stretch occupies residues 373 to 472 (KTKLASGKLG…FYHQLLRELI (100 aa)).

This sequence belongs to the AATF family. In terms of assembly, part of the small subunit (SSU) processome, composed of more than 70 proteins and the RNA chaperone small nucleolar RNA (snoRNA) U3. Interacts with POLR2J, RB1/RB, RBL1/P107 and RBL2/P130. Interacts with PAWR and SP1. May also bind MAPT. Post-translationally, hyperphosphorylated during the G1/S phase transition. As to expression, ubiquitously expressed. Expressed at high levels in brain, heart, kidney, placenta and thymus.

The protein localises to the nucleus. It localises to the nucleolus. Its function is as follows. Part of the small subunit (SSU) processome, first precursor of the small eukaryotic ribosomal subunit. During the assembly of the SSU processome in the nucleolus, many ribosome biogenesis factors, an RNA chaperone and ribosomal proteins associate with the nascent pre-rRNA and work in concert to generate RNA folding, modifications, rearrangements and cleavage as well as targeted degradation of pre-ribosomal RNA by the RNA exosome. May function as a general inhibitor of the histone deacetylase HDAC1. Binding to the pocket region of RB1 may displace HDAC1 from RB1/E2F complexes, leading to activation of E2F target genes and cell cycle progression. Conversely, displacement of HDAC1 from SP1 bound to the CDKN1A promoter leads to increased expression of this CDK inhibitor and blocks cell cycle progression. Also antagonizes PAWR mediated induction of aberrant amyloid peptide production in Alzheimer disease (presenile and senile dementia), although the molecular basis for this phenomenon has not been described to date. This Homo sapiens (Human) protein is Protein AATF.